The sequence spans 577 residues: Pyruvate decarboxylase (577 aa).

Residues Asp-30 and His-116 each coordinate substrate. Residues 388–482 are thiamine pyrophosphate binding; the sequence is TPGYGVNDFI…FLINNDGYTI (95 aa). Mg(2+) contacts are provided by Asp-450, Asn-477, and Gly-479. Glu-483 provides a ligand contact to substrate.

The protein belongs to the TPP enzyme family. Homotetramer. Requires a metal cation as cofactor. Thiamine diphosphate serves as cofactor.

The enzyme catalyses a 2-oxocarboxylate + H(+) = an aldehyde + CO2. The chain is Pyruvate decarboxylase (pdcA) from Aspergillus parasiticus.